The primary structure comprises 150 residues: MDTLLEHEAADLYDEQQIDRIGDAVTGDAGDDSDDTLEDGQQLLGVNRQMDILLDAPQEPPMAVFPARGGPNGGPPRLRKKRSFYTMVKPTPPCQSREPEMCRLMASVTRAMRQVREDQRGEYFANYLVENMTSQNYPNGVGLPQHWGQF.

Residues 60–84 (PPMAVFPARGGPNGGPPRLRKKRSF) are disordered. N131 is a glycosylation site (N-linked (GlcNAc...) asparagine).

The protein belongs to the male-specific scotti family.

Functionally, post-meiotically transcribed gene that has a role in late spermiogenesis; required for actin cone progression during spermatid individualization. This chain is Male-specific protein scotti, found in Drosophila yakuba (Fruit fly).